Here is a 702-residue protein sequence, read N- to C-terminus: Soluble guanylate cyclase gcy-31 (702 aa).

Heme is bound at residue His104. A coiled-coil region spans residues 368 to 406; that stretch reads TQQSAELKLLLHQEAQKSRNMRENMNRLKKERRRTDKLL. One can recognise a Guanylate cyclase domain in the interval 435 to 564; it reads TILFTDIVEF…ETVYVANKME (130 aa). Mg(2+) is bound by residues Asp440 and Asp484. Positions 614–702 are disordered; sequence RHGPHRVPSP…QDLTPRKSIT (89 aa). Residues 633-643 show a composition bias toward acidic residues; it reads SQTEDDDDDEL. Over residues 683–695 the composition is skewed to polar residues; it reads RNSNKTPRQSQDL.

The protein belongs to the adenylyl cyclase class-4/guanylyl cyclase family. In terms of assembly, heterodimer; with other soluble guanylate cyclases. It depends on heme as a cofactor. As to expression, expressed in a pair of bilaterally symmetric neurons in the head.

The protein resides in the cytoplasm. It catalyses the reaction GTP = 3',5'-cyclic GMP + diphosphate. Its activity is regulated as follows. May be regulated by molecular oxygen. Probably not activated by nitric oxide (NO). Synthesizes cyclic GMP (cGMP) from GTP. May play a role in embryogenesis. The protein is Soluble guanylate cyclase gcy-31 (gcy-31) of Caenorhabditis elegans.